The following is a 574-amino-acid chain: Putative thiamine pyrophosphate-containing protein YdaP (574 aa).

Residues 28-55 (DSINEFIEELRHERNQLKFIQTRHEEVA) are a coiled coil. Residue glutamate 52 participates in thiamine diphosphate binding. FAD is bound by residues 256–277 (IGTK…LGTS) and 294–313 (DSDP…LVCD). The interval 384–464 (TVTVWMARHF…ITVVILNNEN (81 aa)) is thiamine pyrophosphate binding. 2 residues coordinate Mg(2+): aspartate 435 and asparagine 462.

Belongs to the TPP enzyme family. It depends on Mg(2+) as a cofactor. The cofactor is thiamine diphosphate.

The protein is Putative thiamine pyrophosphate-containing protein YdaP (ydaP) of Bacillus subtilis (strain 168).